A 314-amino-acid chain; its full sequence is Protein OPG185 (314 aa).

The signal sequence occupies residues 1-16; it reads MTRLPILLLLISLVYA. The region spanning 17 to 121 is the Ig-like V-type domain; that stretch reads TPFPQTSKKI…NDTDKVDYEE (105 aa). Residues 17-278 are Virion surface-facing; sequence TPFPQTSKKI…SNYKTKDFVE (262 aa). Cys34 and Cys103 are joined by a disulfide. N-linked (GlcNAc...) asparagine; by host glycosylation is found at Asn37, Asn69, Asn112, and Asn161. Residues 193 to 202 are compositionally biased toward polar residues; the sequence is NTVSASSGES. The interval 193–214 is disordered; it reads NTVSASSGESTTDETPEPITDK. Asn253 carries an N-linked (GlcNAc...) asparagine; by host glycan. Residues 279-302 traverse the membrane as a helical segment; that stretch reads IFGITALIILSAVAIFCITYYIYN. The Intravirion portion of the chain corresponds to 303-314; sequence KRSRKYKTENKV.

It belongs to the orthopoxvirus OPG185 family. Heterodimerizes with OPG040. The heterodimer OPG185-OPG040 interacts with components of the entry fusion complex OPG143 and OPG094. Heterodimer with C3/VPC protein; disulfide-linked. Glycosylated; contains phosphate and sulfate-substituted glycans. O-glycosylation is required for hemagglutination and hemadsorption activities of infected cell membranes.

Its subcellular location is the virion membrane. It localises to the host membrane. Its function is as follows. Prevents cell to cell fusion by interacting with and directing the viral OPG040 protein on the host plasma membrane. The OPG185-OPG040 complex associates with components of the entry fusion complex (EFC) presumably to avoid superinfection and syncytium formation. Via its interaction with C3/VCP protein, protects the infected cell and probably also the extracellular enveloped virus from complement attack. This is Protein OPG185 (OPG185) from Bos taurus (Bovine).